The primary structure comprises 180 residues: uncharacterized protein (180 aa).

Residues 114–147 adopt a coiled-coil conformation; sequence EDIYEDIVDVRLENQSLEEQLEDFKECSRALKKY.

Belongs to the mimivirus L74/L77/R857 family.

This is an uncharacterized protein from Acanthamoeba polyphaga mimivirus (APMV).